The primary structure comprises 456 residues: Glycosyl hydrolase family 109 protein 2 (456 aa).

Positions 1-33 (MSGFDRRSFLKASMVTAAATALAACASSERATG) form a signal peptide, tat-type signal. Residues 63-64 (ER), Asp-85, 134-137 (WAWH), 154-155 (EV), and Asn-183 contribute to the NAD(+) site. Residues Tyr-212, Arg-231, 243-246 (YPTH), and Tyr-325 each bind substrate. NAD(+) is bound at residue Tyr-243.

The protein belongs to the Gfo/Idh/MocA family. Glycosyl hydrolase 109 subfamily. NAD(+) is required as a cofactor. Post-translationally, predicted to be exported by the Tat system. The position of the signal peptide cleavage has not been experimentally proven.

Functionally, glycosidase. The chain is Glycosyl hydrolase family 109 protein 2 from Shewanella sp. (strain MR-4).